Here is a 221-residue protein sequence, read N- to C-terminus: Veficolin-1 (221 aa).

The N-terminal stretch at 1–25 (MTAWLDFPLALSPLVVVSMKGGSFG) is a signal peptide. The Collagen-like domain occupies 50–104 (QGQAGIPGIPGVPGTNGLPGAKGDLGPQGPPGERGSTGIPGKAGPKGDKGDQGEA). Residues 54–104 (GIPGIPGVPGTNGLPGAKGDLGPQGPPGERGSTGIPGKAGPKGDKGDQGEA) are disordered. The 111-residue stretch at 111–221 (QQQEAGAKDC…DFNNSKTFAK (111 aa)) folds into the Fibrinogen C-terminal domain. C120 and C148 are disulfide-bonded.

Belongs to the ficolin lectin family. Veficolin subfamily. As to expression, expressed by the mandibular venom duct.

The protein resides in the secreted. Initiates complement activation and/or interferes in platelet aggregation and/or blood coagulation. The protein is Veficolin-1 of Varanus komodoensis (Komodo dragon).